A 117-amino-acid chain; its full sequence is Hydrogenase maturation factor HypA (117 aa).

H2 is a binding site for Ni(2+). Zn(2+)-binding residues include C74, C77, C91, and C94.

The protein belongs to the HypA/HybF family.

Its function is as follows. Involved in the maturation of [NiFe] hydrogenases. Required for nickel insertion into the metal center of the hydrogenase. This Helicobacter pylori (strain J99 / ATCC 700824) (Campylobacter pylori J99) protein is Hydrogenase maturation factor HypA.